The sequence spans 462 residues: Argininosuccinate lyase (462 aa).

This sequence belongs to the lyase 1 family. Argininosuccinate lyase subfamily.

The protein resides in the cytoplasm. The catalysed reaction is 2-(N(omega)-L-arginino)succinate = fumarate + L-arginine. The protein operates within amino-acid biosynthesis; L-arginine biosynthesis; L-arginine from L-ornithine and carbamoyl phosphate: step 3/3. The sequence is that of Argininosuccinate lyase from Thermus thermophilus (strain ATCC BAA-163 / DSM 7039 / HB27).